The following is a 331-amino-acid chain: Phosphoribosylformylglycinamidine cyclo-ligase (331 aa).

It belongs to the AIR synthase family.

The protein resides in the cytoplasm. It carries out the reaction 2-formamido-N(1)-(5-O-phospho-beta-D-ribosyl)acetamidine + ATP = 5-amino-1-(5-phospho-beta-D-ribosyl)imidazole + ADP + phosphate + H(+). Its pathway is purine metabolism; IMP biosynthesis via de novo pathway; 5-amino-1-(5-phospho-D-ribosyl)imidazole from N(2)-formyl-N(1)-(5-phospho-D-ribosyl)glycinamide: step 2/2. The polypeptide is Phosphoribosylformylglycinamidine cyclo-ligase (Clostridium botulinum (strain 657 / Type Ba4)).